A 463-amino-acid polypeptide reads, in one-letter code: Glycine--tRNA ligase (463 aa).

Substrate is bound by residues Arg-100 and Glu-175. Residues 207-209 (RNE), 217-222 (FRTREF), 291-292 (EL), and 335-338 (GADR) each bind ATP. 222-226 (FEQME) provides a ligand contact to substrate. 331 to 335 (EPSVG) is a substrate binding site.

It belongs to the class-II aminoacyl-tRNA synthetase family. Homodimer.

The protein resides in the cytoplasm. The catalysed reaction is tRNA(Gly) + glycine + ATP = glycyl-tRNA(Gly) + AMP + diphosphate. Functionally, catalyzes the attachment of glycine to tRNA(Gly). The chain is Glycine--tRNA ligase from Clostridium kluyveri (strain NBRC 12016).